A 535-amino-acid polypeptide reads, in one-letter code: Dipeptide-binding protein (535 aa).

A signal peptide spans 1–28 (MRISLKKSGMLKLGLSLVAMTVAASVQA). C34 and C262 are disulfide-bonded. Glycyl-L-leucine is bound by residues 48–50 (TSG), 383–385 (RPY), and 433–436 (WTGD). C450 and C463 form a disulfide bridge.

The protein belongs to the bacterial solute-binding protein 5 family. As to quaternary structure, the complex is composed of two ATP-binding proteins (DppD and DppF), two transmembrane proteins (DppB and DppC) and a solute-binding protein (DppA).

It localises to the periplasm. With respect to regulation, heme binding is inhibited by dipeptide. Its function is as follows. Part of the ABC transporter DppABCDF involved in dipeptide transport. Binds dipeptides and accepts a wide range of side chains, including small neutral, bulky hydrophobic, and positively and negatively charged groups. Tripeptides are poor substrates. DppA alone controls the specificity of the Dpp transporter. In addition, plays a role in chemotaxis toward peptides via interaction with the chemotaxis protein Tap. In terms of biological role, binds heme. When a foreign outer membrane heme receptor is expressed in E.coli, DppABCDF can also transport heme and its precursor, 5-aminolevulinic acid (ALA), from the periplasm into the cytoplasm. The polypeptide is Dipeptide-binding protein (Escherichia coli (strain K12)).